The following is a 755-amino-acid chain: Dynamin-1-like protein (755 aa).

The residue at position 1 (Met-1) is an N-acetylmethionine. The 294-residue stretch at 22-315 folds into the Dynamin-type G domain; that stretch reads IIQLPQIVVV…LMHHIRDCLP (294 aa). Residues 32 to 39 form a G1 motif region; it reads GTQSSGKS. GTP is bound at residue 32-40; sequence GTQSSGKSS. Positions 58-60 are G2 motif; that stretch reads VTR. The interval 159–162 is G3 motif; the sequence is DLPG. The segment at 228 to 231 is G4 motif; the sequence is TKLD. GTP is bound by residues 228–234 and 259–262; these read TKLDLMD and NRSQ. The segment at 258–261 is G5 motif; the sequence is VNRS. The segment at 357–502 is middle domain; it reads YCNTIEGTAK…NEMVHNLVAI (146 aa). The interval 461–704 is interaction with GSK3B; that stretch reads NYSTQELLRF…NHVKDTLQSE (244 aa). Residues 515–582 form a b domain region; that stretch reads ADACGLMNNN…IQDNRRETKN (68 aa). A disordered region spans residues 536–610; it reads ELPSAVSRDK…QEPTTGNWRG (75 aa). Ser-542 carries the post-translational modification Phosphoserine. Glycyl lysine isopeptide (Lys-Gly) (interchain with G-Cter in SUMO) cross-links involve residues Lys-545 and Lys-548. Low complexity predominate over residues 550-567; that stretch reads PSALAPASQEPSPAASAE. A Phosphoserine modification is found at Ser-561. Residues 568–581 are compositionally biased toward basic and acidic residues; that stretch reads ADGKLIQDNRRETK. Glycyl lysine isopeptide (Lys-Gly) (interchain with G-Cter in SUMO) cross-links involve residues Lys-571 and Lys-581. The segment covering 586–600 has biased composition (gly residues); that stretch reads AGGGIGDGGRIGDGG. Residues Thr-604 and Thr-605 are each glycosylated (O-linked (GlcNAc) threonine). Lys-613 is covalently cross-linked (Glycyl lysine isopeptide (Lys-Gly) (interchain with G-Cter in SUMO)). Position 616 is an N6-acetyllysine; alternate (Lys-616). A Glycyl lysine isopeptide (Lys-Gly) (interchain with G-Cter in SUMO); alternate cross-link involves residue Lys-616. Residue Lys-625 forms a Glycyl lysine isopeptide (Lys-Gly) (interchain with G-Cter in SUMO) linkage. Residue Ser-626 is modified to Phosphoserine. Residue Lys-627 forms a Glycyl lysine isopeptide (Lys-Gly) (interchain with G-Cter in SUMO) linkage. Ser-635 bears the Phosphoserine; by CDK1 mark. Ser-656 bears the Phosphoserine; by CAMK1 and PKA mark. Residue Cys-663 is modified to S-nitrosocysteine. Residues 663-754 form the GED domain; sequence CEVIERLIKS…IIAEIRETHL (92 aa). The segment at 673-687 is important for homodimerization; the sequence is YFLIVRKNIQDSVPK.

Belongs to the TRAFAC class dynamin-like GTPase superfamily. Dynamin/Fzo/YdjA family. Homotetramer; dimerizes through the N-terminal GTP-middle region of one molecule binding to the GED domain of another DNM1L molecule. Oligomerizes in a GTP-dependent manner to form membrane-associated tubules with a spiral pattern. Interacts with GSK3B and MARCHF5. Interacts (via the GTPase and B domains) with UBE2I; the interaction promotes sumoylation of DNM1L, mainly in its B domain. Interacts with PPP3CA; the interaction dephosphorylates DNM1L and regulates its transition to mitochondria. Interacts with BCL2L1 isoform BCL-X(L) and CLTA; DNM1L and BCL2L1 isoform BCL-X(L) may form a complex in synaptic vesicles that also contains clathrin and MFF. Interacts with MFF; the interaction is inhinited by C11orf65/MFI. Interacts with FIS1. Interacts with MIEF2 and MIEF1; GTP-dependent this regulates GTP hydrolysis and DNM1L oligomerization. Interacts with PGAM5; this interaction leads to dephosphorylation at Ser-656 and activation of GTPase activity and eventually to mitochondria fragmentation. Interacts with RALBP1; during mitosis, recruits DNM1L to the mitochondrion and mediates its activation by the mitotic kinase cyclin B-CDK1. Interacts with FUNDC1; this interaction recruits DNM1L/DRP1 at ER-mitochondria contact sites. Post-translationally, phosphorylation/dephosphorylation events on two sites near the GED domain regulate mitochondrial fission. Phosphorylation on Ser-656 by CAMK1 and PKA inhibits the GTPase activity, leading to a defect in mitochondrial fission promoting mitochondrial elongation. Dephosphorylated on this site by PPP3CA which promotes mitochondrial fission. Phosphorylation on Ser-635 by PINK1 activates the GTPase activity and promotes mitochondrial fission. Phosphorylation on Ser-635 by CDK1 also promotes mitochondrial fission. Phosphorylated in a circadian manner at Ser-656. Dephosphorylated by PGAM5. Sumoylated on various lysine residues within the B domain, probably by MUL1. Sumoylation positively regulates mitochondrial fission. Desumoylated by SENP5 during G2/M transition of mitosis. Appears to be linked to its catalytic activity. In terms of processing, S-nitrosylation increases DNM1L dimerization, mitochondrial fission and causes neuronal damage. Post-translationally, O-GlcNAcylation augments the level of the GTP-bound active form of DNM1L and induces translocation from the cytoplasm to mitochondria in cardiomyocytes. It also decreases phosphorylation at Ser-656. Ubiquitination by MARCHF5 affects mitochondrial morphology. Expressed in all tissues tested (at protein level). Longer isoforms are preferentially expressed in brain.

It localises to the cytoplasm. It is found in the cytosol. The protein resides in the golgi apparatus. The protein localises to the endomembrane system. Its subcellular location is the mitochondrion outer membrane. It localises to the peroxisome. It is found in the membrane. The protein resides in the clathrin-coated pit. The protein localises to the cytoplasmic vesicle. Its subcellular location is the secretory vesicle. It localises to the synaptic vesicle membrane. The enzyme catalyses GTP + H2O = GDP + phosphate + H(+). Functions in mitochondrial and peroxisomal division. Mediates membrane fission through oligomerization into membrane-associated tubular structures that wrap around the scission site to constrict and sever the mitochondrial membrane through a GTP hydrolysis-dependent mechanism. The specific recruitment at scission sites is mediated by membrane receptors like MFF, MIEF1 and MIEF2 for mitochondrial membranes. While the recruitment by the membrane receptors is GTP-dependent, the following hydrolysis of GTP induces the dissociation from the receptors and allows DNM1L filaments to curl into closed rings that are probably sufficient to sever a double membrane. Acts downstream of PINK1 to promote mitochondrial fission in a PRKN-dependent manner. Plays an important role in mitochondrial fission during mitosis. Through its function in mitochondrial division, ensures the survival of at least some types of postmitotic neurons, including Purkinje cells, by suppressing oxidative damage. Required for normal brain development, including that of cerebellum. Facilitates developmentally regulated apoptosis during neural tube formation. Required for a normal rate of cytochrome c release and caspase activation during apoptosis; this requirement may depend upon the cell type and the physiological apoptotic cues. Required for formation of endocytic vesicles. Proposed to regulate synaptic vesicle membrane dynamics through association with BCL2L1 isoform Bcl-X(L) which stimulates its GTPase activity in synaptic vesicles; the function may require its recruitment by MFF to clathrin-containing vesicles. Required for programmed necrosis execution. Rhythmic control of its activity following phosphorylation at Ser-656 is essential for the circadian control of mitochondrial ATP production. This is Dynamin-1-like protein from Rattus norvegicus (Rat).